Consider the following 314-residue polypeptide: MSWCDGSDDNYDLNLERVSNTDHPSVQLKDQSQSCVTSRPDSKISAETPITTCPSCGHKLHHHQDDQVGSIKDLPSLPAGVKFDPSDKEILMHLEAKVSSDKRKLHPLIDEFIPTLEGENGICYTHPEKLPGVSKDGQVRHFFHRPSKAYTTGTRKRRKVSTDEEGHETRWHKTGKTRPVLSQSGETGFKKILVLYTNYGRQKKPEKTNWVMHQYHLGSSEDEKDGEPVLSKVFYQTQPRQCGSMEPKPKNLVNLNRFSYENIQAGFGYEHGGKSEETTQVIRELVVREGDGSCSFLSFTCDASKGKESFMKNQ.

Residues 18–39 (VSNTDHPSVQLKDQSQSCVTSR) show a composition bias toward polar residues. Disordered stretches follow at residues 18-48 (VSNTDHPSVQLKDQSQSCVTSRPDSKISAET) and 150-182 (YTTGTRKRRKVSTDEEGHETRWHKTGKTRPVLS). The NAC domain maps to 77-236 (LPAGVKFDPS…EPVLSKVFYQ (160 aa)). Residues 160 to 171 (VSTDEEGHETRW) are compositionally biased toward basic and acidic residues. A DNA-binding region spans residues 187–242 (TGFKKILVLYTNYGRQKKPEKTNWVMHQYHLGSSEDEKDGEPVLSKVFYQTQPRQC).

In terms of tissue distribution, expressed in protoxylem and elongating interfascicular fiber cells of elongating internodes, developing metaxylem cells and interfascicular fibers of non-elongating internodes and developing secondary xylem of roots.

It is found in the nucleus. Its function is as follows. Transcriptional activator that plays a regulatory role in the development of secondary cell wall fibers. Is a direct target of SND1. The chain is NAC domain-containing protein 10 from Arabidopsis thaliana (Mouse-ear cress).